A 569-amino-acid chain; its full sequence is Glycylpeptide N-tetradecanoyltransferase (569 aa).

A compositionally biased stretch (basic and acidic residues) spans 1 to 18; sequence MPPTEESKPVDPAQEKQA. The interval 1–82 is disordered; the sequence is MPPTEESKPV…STESSAEVGL (82 aa). Residues 55-68 show a composition bias toward basic residues; sequence TKKKNKKKSKKKNK. Residues 158–161, 291–293, and 299–303 each bind tetradecanoyl-CoA; these read YKFW, LCI, and GKRLA. The Proton acceptor; via carboxylate role is filled by valine 569.

This sequence belongs to the NMT family. As to quaternary structure, monomer.

The protein resides in the cytoplasm. It catalyses the reaction N-terminal glycyl-[protein] + tetradecanoyl-CoA = N-tetradecanoylglycyl-[protein] + CoA + H(+). In terms of biological role, adds a myristoyl group to the N-terminal glycine residue of certain cellular proteins. This Neurospora crassa (strain ATCC 24698 / 74-OR23-1A / CBS 708.71 / DSM 1257 / FGSC 987) protein is Glycylpeptide N-tetradecanoyltransferase (gtt-1).